The chain runs to 153 residues: Endoribonuclease YbeY (153 aa).

Zn(2+) contacts are provided by His-114, His-118, and His-124.

It belongs to the endoribonuclease YbeY family. Requires Zn(2+) as cofactor.

The protein localises to the cytoplasm. In terms of biological role, single strand-specific metallo-endoribonuclease involved in late-stage 70S ribosome quality control and in maturation of the 3' terminus of the 16S rRNA. The chain is Endoribonuclease YbeY from Nitrosococcus oceani (strain ATCC 19707 / BCRC 17464 / JCM 30415 / NCIMB 11848 / C-107).